A 430-amino-acid chain; its full sequence is Inactive metallocarboxypeptidase ECM14 (430 aa).

Residues 1 to 24 form the signal peptide; the sequence is MLHMNSLWGCFLFVLLAVTGAVQG. The propeptide occupies 25-105; the sequence is LQEDYSEYAV…TLPTSQMMAR (81 aa). An N-linked (GlcNAc...) asparagine glycan is attached at Asn-41. One can recognise a Peptidase M14 domain in the interval 120-425; sequence EYRDLDTIYM…AALKYFCDFL (306 aa). Positions 182 and 185 each coordinate Zn(2+). Substrate-binding positions include 182-185, Arg-240, and 257-258; these read HARE and DH. A disulfide bond links Cys-251 and Cys-272. Asn-295 is a glycosylation site (N-linked (GlcNAc...) asparagine). Residue His-310 coordinates Zn(2+). Position 311 to 312 (311 to 312) interacts with substrate; the sequence is SY.

The protein belongs to the peptidase M14 family. Zn(2+) is required as a cofactor. Post-translationally, N-glycosylated.

It localises to the vacuole. Its subcellular location is the secreted. In terms of biological role, inactive carboxypeptidase that may play a role in cell wall organization and biogenesis. This chain is Inactive metallocarboxypeptidase ECM14, found in Saccharomyces cerevisiae (strain ATCC 204508 / S288c) (Baker's yeast).